Consider the following 391-residue polypeptide: Nucleosome assembly protein 1-like 1 (391 aa).

Positions 1–10 (MADIDNKEQS) are enriched in basic and acidic residues. A disordered region spans residues 1–32 (MADIDNKEQSELDQDLDDVEEVEEEETGEETK). Ala2 carries the post-translational modification N-acetylalanine. Ser10 bears the Phosphoserine mark. Positions 11–28 (ELDQDLDDVEEVEEEETG) are enriched in acidic residues. 2 positions are modified to phosphothreonine: Thr62 and Thr64. Position 69 is a phosphoserine (Ser69). Lys116 is modified (N6-acetyllysine). The NAP1L motif motif lies at 125–150 (YEPTEEECEWKPDEEDEISEELKEKA). Residues 132–143 (CEWKPDEEDEIS) are compositionally biased toward acidic residues. Residues 132-163 (CEWKPDEEDEISEELKEKAKIEDEKKDEEKED) are disordered. Ser143 is subject to Phosphoserine. Positions 144–163 (EELKEKAKIEDEKKDEEKED) are enriched in basic and acidic residues. The Nuclear localization signal signature appears at 273 to 279 (IKKKQKH). The span at 346-376 (AIEDDDDDYDEEGEEADEEGEEEGDEENDPD) shows a compositional bias: acidic residues. The disordered stretch occupies residues 346-391 (AIEDDDDDYDEEGEEADEEGEEEGDEENDPDYDPKKDQNPAECKQQ). 5-glutamyl polyglycine is present on residues Glu359 and Glu360. Basic and acidic residues predominate over residues 377 to 391 (YDPKKDQNPAECKQQ). Cys388 bears the Cysteine methyl ester mark. A lipid anchor (S-farnesyl cysteine) is attached at Cys388. The propeptide at 389–391 (KQQ) is removed in mature form.

Belongs to the nucleosome assembly protein (NAP) family. Homodimer. The dimer binds strongly and sequentially to single and double H2A-H2B heterodimers. Interacts with ERCC6; this interaction increases ERCC6 processivity. Interacts with RAD54. Interacts with SETD1A. Post-translationally, polyglycylated by TTLL10 on glutamate residues, resulting in polyglycine chains on the gamma-carboxyl group. Both polyglutamylation and polyglycylation modifications can coexist on the same protein on adjacent residues, and lowering polyglycylation levels increases polyglutamylation, and reciprocally. Polyglutamylated by TTLL4 on glutamate residues, resulting in polyglutamate chains on the gamma-carboxyl group. Both polyglutamylation and polyglycylation modifications can coexist on the same protein on adjacent residues, and lowering polyglycylation levels increases polyglutamylation, and reciprocally.

Its subcellular location is the nucleus. It localises to the melanosome. The protein localises to the cytoplasm. In terms of biological role, histone chaperone that plays a role in the nuclear import of H2A-H2B and nucleosome assembly. Also participates in several important DNA repair mechanisms: greatly enhances ERCC6-mediated chromatin remodeling which is essential for transcription-coupled nucleotide excision DNA repair. Also stimulates homologous recombination (HR) by RAD51 and RAD54 which is essential in mitotic DNA double strand break (DSB) repair. Plays a key role in the regulation of embryonic neurogenesis. Promotes the proliferation of neural progenitors and inhibits neuronal differentiation during cortical development. Regulates neurogenesis via the modulation of RASSF10; regulates RASSF10 expression by promoting SETD1A-mediated H3K4 methylation at the RASSF10 promoter. The sequence is that of Nucleosome assembly protein 1-like 1 (NAP1L1) from Pongo abelii (Sumatran orangutan).